Here is a 1183-residue protein sequence, read N- to C-terminus: Putative ATP-dependent RNA helicase PB1A10.06c (1183 aa).

Disordered stretches follow at residues 1 to 92 (MGRL…KKRL) and 165 to 315 (ETTT…RASR). Positions 60-81 (VPKEERQKRKQELKDQLLKENE) are enriched in basic and acidic residues. Low complexity-rich tracts occupy residues 165–176 (ETTTTKSSTAET) and 184–196 (TRSG…STGT). Acidic residues predominate over residues 224–251 (EDPEYDSAEEDYLSTDSEEFSEDSDNSS). The span at 252–270 (EENKDTNEPSTKDAEKTVP) shows a compositional bias: basic and acidic residues. Positions 292–308 (ENEDFDLETSEDDSSDD) are enriched in acidic residues. The 178-residue stretch at 408–585 (MEQIFANDVV…KLLFSVPPPI (178 aa)) folds into the Helicase ATP-binding domain. 421–428 (GATGSGKT) is a binding site for ATP. A DEAH box motif is present at residues 522–525 (DEAH). The Helicase C-terminal domain occupies 611–831 (AFDKVCLIHK…SIVLQMKNMN (221 aa)). Over residues 673-683 (EDLQSETEDID) the composition is skewed to acidic residues. Positions 673–696 (EDLQSETEDIDQVPTSSSSSVTYD) are disordered.

The protein belongs to the DEAD box helicase family. DEAH subfamily.

Its subcellular location is the nucleus. The protein resides in the nucleolus. It catalyses the reaction ATP + H2O = ADP + phosphate + H(+). The chain is Putative ATP-dependent RNA helicase PB1A10.06c from Schizosaccharomyces pombe (strain 972 / ATCC 24843) (Fission yeast).